The following is a 504-amino-acid chain: Anaerobic nitric oxide reductase transcription regulator NorR (504 aa).

4-aspartylphosphate is present on D57. The Sigma-54 factor interaction domain occupies 187 to 416 (MIGLSPGMTQ…LEHAIHRAVV (230 aa)). Residues 215–222 (GETGTGKE) and 278–287 (ADNGTLFLDE) each bind ATP. Positions 479–498 (WAACARMLETDVANLHRLAK) form a DNA-binding region, H-T-H motif.

Its pathway is nitrogen metabolism; nitric oxide reduction. Its function is as follows. Required for the expression of anaerobic nitric oxide (NO) reductase, acts as a transcriptional activator for at least the norVW operon. Activation also requires sigma-54. The chain is Anaerobic nitric oxide reductase transcription regulator NorR from Escherichia coli O45:K1 (strain S88 / ExPEC).